Here is a 363-residue protein sequence, read N- to C-terminus: 3-dehydroquinate synthase (363 aa).

NAD(+)-binding positions include 75–80 (DAEEGK), 109–113 (GAVTD), 133–134 (TS), lysine 146, lysine 155, and 173–176 (TLQT). Residues glutamate 188, histidine 251, and histidine 267 each coordinate Zn(2+).

This sequence belongs to the sugar phosphate cyclases superfamily. Dehydroquinate synthase family. It depends on Co(2+) as a cofactor. Requires Zn(2+) as cofactor. NAD(+) is required as a cofactor.

It localises to the cytoplasm. It catalyses the reaction 7-phospho-2-dehydro-3-deoxy-D-arabino-heptonate = 3-dehydroquinate + phosphate. The protein operates within metabolic intermediate biosynthesis; chorismate biosynthesis; chorismate from D-erythrose 4-phosphate and phosphoenolpyruvate: step 2/7. Catalyzes the conversion of 3-deoxy-D-arabino-heptulosonate 7-phosphate (DAHP) to dehydroquinate (DHQ). This Paenarthrobacter aurescens (strain TC1) protein is 3-dehydroquinate synthase.